We begin with the raw amino-acid sequence, 239 residues long: Ribonuclease PH (239 aa).

Phosphate contacts are provided by residues Arg86 and 124 to 126 (GTR).

This sequence belongs to the RNase PH family. In terms of assembly, homohexameric ring arranged as a trimer of dimers.

It catalyses the reaction tRNA(n+1) + phosphate = tRNA(n) + a ribonucleoside 5'-diphosphate. Functionally, phosphorolytic 3'-5' exoribonuclease that plays an important role in tRNA 3'-end maturation. Removes nucleotide residues following the 3'-CCA terminus of tRNAs; can also add nucleotides to the ends of RNA molecules by using nucleoside diphosphates as substrates, but this may not be physiologically important. Probably plays a role in initiation of 16S rRNA degradation (leading to ribosome degradation) during starvation. The sequence is that of Ribonuclease PH from Marinomonas sp. (strain MWYL1).